The following is a 365-amino-acid chain: Aminomethyltransferase (365 aa).

This sequence belongs to the GcvT family. The glycine cleavage system is composed of four proteins: P, T, L and H.

It catalyses the reaction N(6)-[(R)-S(8)-aminomethyldihydrolipoyl]-L-lysyl-[protein] + (6S)-5,6,7,8-tetrahydrofolate = N(6)-[(R)-dihydrolipoyl]-L-lysyl-[protein] + (6R)-5,10-methylene-5,6,7,8-tetrahydrofolate + NH4(+). Functionally, the glycine cleavage system catalyzes the degradation of glycine. This is Aminomethyltransferase from Yersinia enterocolitica serotype O:8 / biotype 1B (strain NCTC 13174 / 8081).